The following is a 642-amino-acid chain: Chaperone protein DnaK (642 aa).

At Thr-200 the chain carries Phosphothreonine; by autocatalysis. The span at 603–623 (AAAAEQGGNADAASGNAQASK) shows a compositional bias: low complexity. The disordered stretch occupies residues 603–627 (AAAAEQGGNADAASGNAQASKAADD).

Belongs to the heat shock protein 70 family.

Functionally, acts as a chaperone. The protein is Chaperone protein DnaK of Xanthomonas campestris pv. campestris (strain B100).